The chain runs to 155 residues: RxLR effector protein 24 (155 aa).

The N-terminal stretch at 1 to 21 (MRLLIWVLFVTLVTFVSNTTA) is a signal peptide. Positions 52–78 (RFLRTESKNDLKSDADTNGIDIEDEER) match the RxLR-dEER motif. An RABA-binding domain region spans residues 105 to 155 (EKAFQRMNQKGETPTTLAKRLDIGKTAEKRFEKTYEKYTAWWINHHTNAGT).

The protein belongs to the RxLR effector family. As to quaternary structure, interacts with Arabidopsis thaliana RABA GTPases including RABA1a, RABA1b, RABA1c, RABA1d, RABA1f, RABA2a, RABA2c, RABA2d, RABA4a, RABA4b and RABA4c.

It is found in the secreted. Its subcellular location is the host cell membrane. The protein localises to the host endomembrane system. Effector protein that contributes to pathogen virulence. Targets members of the RABA GTPases subfamily to inhibit vesicular secretion, leading to an accumulation of secretory proteins in the endoplasmic reticulum. This Phytophthora brassicae protein is RxLR effector protein 24.